A 383-amino-acid chain; its full sequence is Thioredoxin reductase 2 (383 aa).

FAD-binding positions include S66 to A69, F87 to E88, I95 to Q100, N109, V142, C200, D345, and R352 to A354. C197 and C200 form a disulfide bridge.

This sequence belongs to the class-II pyridine nucleotide-disulfide oxidoreductase family. As to quaternary structure, homodimer. It depends on FAD as a cofactor.

It is found in the cytoplasm. The protein localises to the mitochondrion matrix. The enzyme catalyses [thioredoxin]-dithiol + NADP(+) = [thioredoxin]-disulfide + NADPH + H(+). Possesses thioredoxin-disulfide reductase activity towards thioredoxins O1, O2 and F3. The chain is Thioredoxin reductase 2 (NTR2) from Arabidopsis thaliana (Mouse-ear cress).